The primary structure comprises 86 residues: Small ribosomal subunit protein bS20 (86 aa).

Residues methionine 1–methionine 22 form a disordered region.

The protein belongs to the bacterial ribosomal protein bS20 family.

Binds directly to 16S ribosomal RNA. The chain is Small ribosomal subunit protein bS20 from Thioalkalivibrio sulfidiphilus (strain HL-EbGR7).